A 399-amino-acid polypeptide reads, in one-letter code: MMNIPNIENCDLHGKAVLLRVDFNIPIKNGKVHDATRVLRSLPTIRHLVNAGAKVIIISHFGRPRAKDNNLSLKNVVKTLSQLLNKEVKFVDDCIGKKVQKVVNAIAIRDVILLENLRFYKEEEQNDANFAKQLASLADVYVNDAFSCSHRAHASISRITEFLPSYAGFCLQDELRYLEKAVSFEAKPITAIVGGAKISTKIKMLIRLAEKVDYLVLGGAIANNFLLFNKVNIGKSFFQNGVDSLLHDVVKIADKNNCKIVIPEDVLIAVNSDYSTCILRKTESVLDNDVILDIGPQTLSTISSIVASSKALLWNGPIGVFEHSAFANGTIEVMKVVSDSTHKGKLTSVIGGGDSLSAINAAGLTDKDFTYVSTGGGAFLSWLSGDKMPGIAALQSMLN.

Residues 22-24 (DFN), Arg-37, 60-63 (HFGR), Arg-118, and Arg-151 contribute to the substrate site. ATP-binding positions include Lys-201, Glu-322, and 352 to 355 (GGDS).

The protein belongs to the phosphoglycerate kinase family. Monomer.

The protein resides in the cytoplasm. It catalyses the reaction (2R)-3-phosphoglycerate + ATP = (2R)-3-phospho-glyceroyl phosphate + ADP. The protein operates within carbohydrate degradation; glycolysis; pyruvate from D-glyceraldehyde 3-phosphate: step 2/5. The protein is Phosphoglycerate kinase of Wolbachia sp. subsp. Brugia malayi (strain TRS).